We begin with the raw amino-acid sequence, 541 residues long: Propionyl-CoA carboxylase beta chain, mitochondrial (541 aa).

Residues 1 to 28 (MAAVIRIRAMAAGTRLRVLNCGLGTTIR) constitute a mitochondrion transit peptide. A CoA carboxyltransferase N-terminal domain is found at 34-292 (PVSVNERIEN…SNQDPASIRE (259 aa)). Residues 34 to 535 (PVSVNERIEN…SKKVHRPWRK (502 aa)) form a carboxyltransferase region. Phosphoserine is present on S73. K101 carries the N6-acetyllysine; alternate modification. K101 is subject to N6-succinyllysine; alternate. K250 carries the post-translational modification N6-succinyllysine. Residues 296–535 (PSDRLVPELD…SKKVHRPWRK (240 aa)) form the CoA carboxyltransferase C-terminal domain. Residues 327–360 (DEREFFEIMPNYAKNIVIGFARMNGRTVGIVGNQ) form an acyl-CoA binding region. Residues K476 and K491 each carry the N6-acetyllysine; alternate modification. K476 and K491 each carry N6-succinyllysine; alternate.

This sequence belongs to the AccD/PCCB family. As to quaternary structure, the holoenzyme is a dodecamer composed of 6 PCCA/alpha subunits and 6 PCCB/beta subunits.

It is found in the mitochondrion matrix. It carries out the reaction propanoyl-CoA + hydrogencarbonate + ATP = (S)-methylmalonyl-CoA + ADP + phosphate + H(+). The catalysed reaction is butanoyl-CoA + hydrogencarbonate + ATP = (2S)-ethylmalonyl-CoA + ADP + phosphate + H(+). The protein operates within metabolic intermediate metabolism; propanoyl-CoA degradation; succinyl-CoA from propanoyl-CoA: step 1/3. Its function is as follows. This is one of the 2 subunits of the biotin-dependent propionyl-CoA carboxylase (PCC), a mitochondrial enzyme involved in the catabolism of odd chain fatty acids, branched-chain amino acids isoleucine, threonine, methionine, and valine and other metabolites. Propionyl-CoA carboxylase catalyzes the carboxylation of propionyl-CoA/propanoyl-CoA to D-methylmalonyl-CoA/(S)-methylmalonyl-CoA. Within the holoenzyme, the alpha subunit catalyzes the ATP-dependent carboxylation of the biotin carried by the biotin carboxyl carrier (BCC) domain, while the beta subunit then transfers the carboxyl group from carboxylated biotin to propionyl-CoA. Propionyl-CoA carboxylase also significantly acts on butyryl-CoA/butanoyl-CoA, which is converted to ethylmalonyl-CoA/(2S)-ethylmalonyl-CoA. Other alternative minor substrates include (2E)-butenoyl-CoA/crotonoyl-CoA. This Rattus norvegicus (Rat) protein is Propionyl-CoA carboxylase beta chain, mitochondrial.